Reading from the N-terminus, the 224-residue chain is UPF0111 protein TC_0063 (224 aa).

It belongs to the UPF0111 family.

The polypeptide is UPF0111 protein TC_0063 (Chlamydia muridarum (strain MoPn / Nigg)).